The sequence spans 60 residues: Large ribosomal subunit protein uL30 (60 aa).

This sequence belongs to the universal ribosomal protein uL30 family. As to quaternary structure, part of the 50S ribosomal subunit.

The protein is Large ribosomal subunit protein uL30 of Dehalococcoides mccartyi (strain CBDB1).